The following is a 160-amino-acid chain: Lipoprotein signal peptidase (160 aa).

3 consecutive transmembrane segments (helical) span residues 13 to 33 (IYITTIIFILILDISSKHLII), 72 to 92 (WFLSTVSILTILVMTRIITKL), and 104 to 124 (SLIIAGATGNLIDRIFYGFVV). Residues Asp125 and Asp143 contribute to the active site. Residues 134-154 (WHFATFNIADCSIFIGIIILM) form a helical membrane-spanning segment.

This sequence belongs to the peptidase A8 family.

It is found in the cell inner membrane. It carries out the reaction Release of signal peptides from bacterial membrane prolipoproteins. Hydrolyzes -Xaa-Yaa-Zaa-|-(S,diacylglyceryl)Cys-, in which Xaa is hydrophobic (preferably Leu), and Yaa (Ala or Ser) and Zaa (Gly or Ala) have small, neutral side chains.. It functions in the pathway protein modification; lipoprotein biosynthesis (signal peptide cleavage). Functionally, this protein specifically catalyzes the removal of signal peptides from prolipoproteins. This Buchnera aphidicola subsp. Acyrthosiphon pisum (strain Tuc7) protein is Lipoprotein signal peptidase.